Consider the following 270-residue polypeptide: Diaminopimelate epimerase (270 aa).

3 residues coordinate substrate: N15, Q49, and N66. The Proton donor role is filled by C75. Substrate contacts are provided by residues 76 to 77, N155, N187, and 204 to 205; these read GN and ER. C213 (proton acceptor) is an active-site residue. Position 214–215 (214–215) interacts with substrate; it reads GS.

It belongs to the diaminopimelate epimerase family. In terms of assembly, homodimer.

Its subcellular location is the cytoplasm. The enzyme catalyses (2S,6S)-2,6-diaminopimelate = meso-2,6-diaminopimelate. It participates in amino-acid biosynthesis; L-lysine biosynthesis via DAP pathway; DL-2,6-diaminopimelate from LL-2,6-diaminopimelate: step 1/1. In terms of biological role, catalyzes the stereoinversion of LL-2,6-diaminopimelate (L,L-DAP) to meso-diaminopimelate (meso-DAP), a precursor of L-lysine and an essential component of the bacterial peptidoglycan. The protein is Diaminopimelate epimerase of Rickettsia massiliae (strain Mtu5).